A 100-amino-acid polypeptide reads, in one-letter code: DNA-directed RNA polymerase subunit Rpo11 (100 aa).

It belongs to the archaeal Rpo11/eukaryotic RPB11/RPC19 RNA polymerase subunit family. As to quaternary structure, part of the RNA polymerase complex.

Its subcellular location is the cytoplasm. The catalysed reaction is RNA(n) + a ribonucleoside 5'-triphosphate = RNA(n+1) + diphosphate. DNA-dependent RNA polymerase (RNAP) catalyzes the transcription of DNA into RNA using the four ribonucleoside triphosphates as substrates. This chain is DNA-directed RNA polymerase subunit Rpo11, found in Picrophilus torridus (strain ATCC 700027 / DSM 9790 / JCM 10055 / NBRC 100828 / KAW 2/3).